The sequence spans 361 residues: MTRAFNFSAGPATLPESVLRQAQAEMVEWNGVGASIVEISHRSADFMAVAAAAEADLRSLLSIPDDYAVMFTAGGATTIQALLPLNFAAPGQAADYVITGHWGKTAIKQASPYVDARIAADAETGGFLDIPPAASWTLSPHSAYVHITANETIHGVEFRDTPEVGTLPLFADFSSSIASEPLDISRYGLIYAGAQKNLGPVGISVVIVRRDLLERAGQPRADIFNYASHVARDSMLNTPPTWNWYLLGLTVKWMLEQGGVQEFARRNAEKAALVYGAIDGAGGFYRNLITPAVRSRMNIPFFLPDEQLDALFVSESKAAGLLALKGHKAVGGIRASLYNAMPLAGAQALANFMHDFQQRHG.

Arginine 42 contributes to the L-glutamate binding site. Pyridoxal 5'-phosphate contacts are provided by residues 76-77 (AT), tryptophan 102, threonine 152, aspartate 172, and glutamine 195. Lysine 196 bears the N6-(pyridoxal phosphate)lysine mark. 237 to 238 (NT) is a binding site for pyridoxal 5'-phosphate.

It belongs to the class-V pyridoxal-phosphate-dependent aminotransferase family. SerC subfamily. As to quaternary structure, homodimer. It depends on pyridoxal 5'-phosphate as a cofactor.

The protein localises to the cytoplasm. It catalyses the reaction O-phospho-L-serine + 2-oxoglutarate = 3-phosphooxypyruvate + L-glutamate. It carries out the reaction 4-(phosphooxy)-L-threonine + 2-oxoglutarate = (R)-3-hydroxy-2-oxo-4-phosphooxybutanoate + L-glutamate. It functions in the pathway amino-acid biosynthesis; L-serine biosynthesis; L-serine from 3-phospho-D-glycerate: step 2/3. Its pathway is cofactor biosynthesis; pyridoxine 5'-phosphate biosynthesis; pyridoxine 5'-phosphate from D-erythrose 4-phosphate: step 3/5. Catalyzes the reversible conversion of 3-phosphohydroxypyruvate to phosphoserine and of 3-hydroxy-2-oxo-4-phosphonooxybutanoate to phosphohydroxythreonine. This Xanthomonas oryzae pv. oryzae (strain MAFF 311018) protein is Phosphoserine aminotransferase.